Here is a 1030-residue protein sequence, read N- to C-terminus: Probable serine/threonine-protein kinase SIS8 (1030 aa).

Composition is skewed to polar residues over residues 44-58 (PNQS…STTK) and 399-419 (YSAS…NGIE). 4 disordered regions span residues 44–84 (PNQS…PEIK), 399–474 (YSAS…KAPF), 555–625 (TVES…ASST), and 689–736 (LGSN…SDCD). Basic and acidic residues-rich tracts occupy residues 426-435 (TEFRTGEHRS), 458-471 (ISRE…KVEK), and 560-580 (NSTE…EGRH). Over residues 613–625 (SQSDSSHSEASST) the composition is skewed to low complexity. In terms of domain architecture, Protein kinase spans 748–1003 (ITVGERIGLG…AEIMASLKRL (256 aa)). ATP contacts are provided by residues 754–762 (IGLGSYGEV) and Lys-775. Asp-871 acts as the Proton acceptor in catalysis. Residues 1007–1023 (VTGSNIPRPVPSSSSLP) are compositionally biased toward polar residues. Residues 1007–1030 (VTGSNIPRPVPSSSSLPTEHEQKD) form a disordered region.

Belongs to the protein kinase superfamily. Ser/Thr protein kinase family. As to quaternary structure, interacts with UGT72E1. Expressed roots, rosette and cauline leaves, and at lower levels in flowers and siliques.

It localises to the nucleus. The catalysed reaction is L-seryl-[protein] + ATP = O-phospho-L-seryl-[protein] + ADP + H(+). It catalyses the reaction L-threonyl-[protein] + ATP = O-phospho-L-threonyl-[protein] + ADP + H(+). Functionally, acts as a negative regulator of salt tolerance. Mediates sugar response during early seedling development. This is Probable serine/threonine-protein kinase SIS8 from Arabidopsis thaliana (Mouse-ear cress).